Reading from the N-terminus, the 572-residue chain is [Pyruvate dehydrogenase [acetyl-transferring]]-phosphatase 1, mitochondrial (572 aa).

Residues 95–122 (NTSGNINMPSPNPKGTETQKSQRSQNDQ) are disordered. The PPM-type phosphatase domain occupies 153–543 (RYDVAQLPSN…DDLTVTVAFF (391 aa)). Mn(2+) contacts are provided by Asp197, Gly198, Asp424, and Asp480. Positions 470-480 (EAQRPAFRYKD) are enriched in basic and acidic residues. The tract at residues 470 to 492 (EAQRPAFRYKDNNSSSPSGSNPE) is disordered. A compositionally biased stretch (low complexity) spans 481 to 491 (NNSSSPSGSNP).

Belongs to the PP2C family. The cofactor is Mg(2+). Mn(2+) is required as a cofactor. Processed by mitochondrial inner membrane protease (IMP) complex and released to the intermembrane space.

The protein localises to the mitochondrion intermembrane space. It catalyses the reaction O-phospho-L-seryl-[pyruvate dehydrogenase E1 alpha subunit] + H2O = L-seryl-[pyruvate dehydrogenase E1 alpha subunit] + phosphate. In terms of biological role, catalyzes the dephosphorylation and concomitant reactivation of the E1 alpha subunit (PDA1) of the pyruvate dehydrogenase complex. This is [Pyruvate dehydrogenase [acetyl-transferring]]-phosphatase 1, mitochondrial (PTC5) from Saccharomyces cerevisiae (strain ATCC 204508 / S288c) (Baker's yeast).